The sequence spans 208 residues: Urease accessory protein UreG 1 (208 aa).

Position 14–21 (14–21 (GPVGSGKT)) interacts with GTP.

The protein belongs to the SIMIBI class G3E GTPase family. UreG subfamily. In terms of assembly, homodimer. UreD, UreF and UreG form a complex that acts as a GTP-hydrolysis-dependent molecular chaperone, activating the urease apoprotein by helping to assemble the nickel containing metallocenter of UreC. The UreE protein probably delivers the nickel.

The protein localises to the cytoplasm. Functionally, facilitates the functional incorporation of the urease nickel metallocenter. This process requires GTP hydrolysis, probably effectuated by UreG. In terms of biological role, disruption of the ure1 gene cluster suggests that it protects brucellae during their passage through the stomach. The major route of infection in human brucellosis is oral. The sequence is that of Urease accessory protein UreG 1 from Brucella abortus (strain 2308).